We begin with the raw amino-acid sequence, 359 residues long: ATP-dependent kinase YFH7 (359 aa).

Residue 31-39 participates in ATP binding; it reads GPPGSGKST.

Belongs to the YFH7 family.

In terms of biological role, ATP-dependent kinase that could be involved in endoplasmic reticulum membrane assembly. This is ATP-dependent kinase YFH7 (YFH7) from Vanderwaltozyma polyspora (strain ATCC 22028 / DSM 70294 / BCRC 21397 / CBS 2163 / NBRC 10782 / NRRL Y-8283 / UCD 57-17) (Kluyveromyces polysporus).